The sequence spans 695 residues: Nicastrin (695 aa).

An N-terminal signal peptide occupies residues 1-22 (MEMRLNAASIWLLILSYGATIA). Residues 23–654 (QGERTRDKMY…IFLRPSNVHQ (632 aa)) lie on the Extracellular side of the membrane. 9 N-linked (GlcNAc...) asparagine glycosylation sites follow: Asn-45, Asn-108, Asn-116, Asn-138, Asn-381, Asn-461, Asn-489, Asn-585, and Asn-609. The chain crosses the membrane as a helical span at residues 655-675 (VTTLSVGIVVLIISFCLVYII). Residues 676–695 (SSRSEVLFEDLPASNAALFG) lie on the Cytoplasmic side of the membrane.

The protein belongs to the nicastrin family. As to quaternary structure, component of the gamma-secretase complex, a complex composed of a presenilin (Psn) homodimer, nicastrin (Nct), Aph-1 and Pen-2.

It is found in the membrane. Its function is as follows. Essential subunit of the gamma-secretase complex, an endoprotease complex that catalyzes the intramembrane cleavage of integral membrane proteins such as Notch. It probably represents a stabilizing cofactor required for the assembly of the gamma-secretase complex. The polypeptide is Nicastrin (Drosophila melanogaster (Fruit fly)).